The sequence spans 329 residues: MTMDTSPSHDAERGVTDVLLAEPRGFCAGVDRAIEIVERAIRKFGAPIYVRHEIVHNTFVVNDLKAKGAIFIEDLADVPPGATLVFSAHGVSRAVRDEAEARGFSVYDATCPLVTKVHVEVAKLHKEGYEFIMIGHKGHPEVEGTMGQLSEGIYLVEDVDDVAQLRVTRPDRLAVVTQTTLSTDDAAEILAAVKRRFPQVREPKQQDICYATQNRQDAVKVLAPQVDVVVVVGSPTSSNSNRLRELAERLGTPAYMVDSASDLRPEWFEGSARVGLTAGASAPELLVREVIERLRALGAVSVRKMAGVEETVRFPLPLGLGDKSMEGVA.

Cys-27 is a binding site for [4Fe-4S] cluster. The (2E)-4-hydroxy-3-methylbut-2-enyl diphosphate site is built by His-56 and His-89. Positions 56 and 89 each coordinate dimethylallyl diphosphate. Positions 56 and 89 each coordinate isopentenyl diphosphate. Cys-111 serves as a coordination point for [4Fe-4S] cluster. A (2E)-4-hydroxy-3-methylbut-2-enyl diphosphate-binding site is contributed by His-139. Dimethylallyl diphosphate is bound at residue His-139. His-139 contacts isopentenyl diphosphate. The active-site Proton donor is the Glu-141. Residue Thr-179 participates in (2E)-4-hydroxy-3-methylbut-2-enyl diphosphate binding. Cys-209 lines the [4Fe-4S] cluster pocket. Positions 237, 238, 239, and 281 each coordinate (2E)-4-hydroxy-3-methylbut-2-enyl diphosphate. Positions 237, 238, 239, and 281 each coordinate dimethylallyl diphosphate. 4 residues coordinate isopentenyl diphosphate: Ser-237, Ser-238, Asn-239, and Ser-281.

Belongs to the IspH family. [4Fe-4S] cluster is required as a cofactor.

The enzyme catalyses isopentenyl diphosphate + 2 oxidized [2Fe-2S]-[ferredoxin] + H2O = (2E)-4-hydroxy-3-methylbut-2-enyl diphosphate + 2 reduced [2Fe-2S]-[ferredoxin] + 2 H(+). It catalyses the reaction dimethylallyl diphosphate + 2 oxidized [2Fe-2S]-[ferredoxin] + H2O = (2E)-4-hydroxy-3-methylbut-2-enyl diphosphate + 2 reduced [2Fe-2S]-[ferredoxin] + 2 H(+). Its pathway is isoprenoid biosynthesis; dimethylallyl diphosphate biosynthesis; dimethylallyl diphosphate from (2E)-4-hydroxy-3-methylbutenyl diphosphate: step 1/1. It participates in isoprenoid biosynthesis; isopentenyl diphosphate biosynthesis via DXP pathway; isopentenyl diphosphate from 1-deoxy-D-xylulose 5-phosphate: step 6/6. In terms of biological role, catalyzes the conversion of 1-hydroxy-2-methyl-2-(E)-butenyl 4-diphosphate (HMBPP) into a mixture of isopentenyl diphosphate (IPP) and dimethylallyl diphosphate (DMAPP). Acts in the terminal step of the DOXP/MEP pathway for isoprenoid precursor biosynthesis. The polypeptide is 4-hydroxy-3-methylbut-2-enyl diphosphate reductase (Methylibium petroleiphilum (strain ATCC BAA-1232 / LMG 22953 / PM1)).